Reading from the N-terminus, the 373-residue chain is 4-hydroxy-3-methylbut-2-en-1-yl diphosphate synthase (flavodoxin) (373 aa).

[4Fe-4S] cluster is bound by residues cysteine 270, cysteine 273, cysteine 305, and glutamate 312.

This sequence belongs to the IspG family. [4Fe-4S] cluster serves as cofactor.

The enzyme catalyses (2E)-4-hydroxy-3-methylbut-2-enyl diphosphate + oxidized [flavodoxin] + H2O + 2 H(+) = 2-C-methyl-D-erythritol 2,4-cyclic diphosphate + reduced [flavodoxin]. Its pathway is isoprenoid biosynthesis; isopentenyl diphosphate biosynthesis via DXP pathway; isopentenyl diphosphate from 1-deoxy-D-xylulose 5-phosphate: step 5/6. Converts 2C-methyl-D-erythritol 2,4-cyclodiphosphate (ME-2,4cPP) into 1-hydroxy-2-methyl-2-(E)-butenyl 4-diphosphate. The protein is 4-hydroxy-3-methylbut-2-en-1-yl diphosphate synthase (flavodoxin) of Erwinia tasmaniensis (strain DSM 17950 / CFBP 7177 / CIP 109463 / NCPPB 4357 / Et1/99).